Here is a 474-residue protein sequence, read N- to C-terminus: 2-succinylbenzoate--CoA ligase (474 aa).

The protein belongs to the ATP-dependent AMP-binding enzyme family. MenE subfamily.

The catalysed reaction is 2-succinylbenzoate + ATP + CoA = 2-succinylbenzoyl-CoA + AMP + diphosphate. It functions in the pathway quinol/quinone metabolism; 1,4-dihydroxy-2-naphthoate biosynthesis; 1,4-dihydroxy-2-naphthoate from chorismate: step 5/7. The protein operates within quinol/quinone metabolism; menaquinone biosynthesis. Converts 2-succinylbenzoate (OSB) to 2-succinylbenzoyl-CoA (OSB-CoA). In Staphylococcus epidermidis (strain ATCC 35984 / DSM 28319 / BCRC 17069 / CCUG 31568 / BM 3577 / RP62A), this protein is 2-succinylbenzoate--CoA ligase.